The primary structure comprises 543 residues: Sodium-dependent lysophosphatidylcholine symporter 1 (543 aa).

Low complexity predominate over residues 1 to 14; the sequence is MAKGEGAESGSAAG. Residues 1-34 form a disordered region; sequence MAKGEGAESGSAAGLLPTSILQSTERPAQVKKEP. The Cytoplasmic portion of the chain corresponds to 1-40; that stretch reads MAKGEGAESGSAAGLLPTSILQSTERPAQVKKEPKKKKQQ. The helical transmembrane segment at 41-70 threads the bilayer; the sequence is LSVCNKLCYALGGAPYQVTGCALGFFLQIY. Residues 71 to 94 lie on the Extracellular side of the membrane; it reads LLDVAQKDEEVVFCFSSFQVGPFS. Residues 95 to 115 traverse the membrane as a helical segment; it reads ASIILFVGRAWDAITDPLVGL. Topologically, residues 116–127 are cytoplasmic; it reads CISKSPWTCLGR. A helical membrane pass occupies residues 128–147; it reads LMPWIIFSTPLAVIAYFLIW. Over 148–157 the chain is Extracellular; it reads FVPDFPHGQT. Residues 158–182 form a helical membrane-spanning segment; the sequence is YWYLLFYCLFETMVTCFHVPYSALT. Over 183 to 189 the chain is Cytoplasmic; the sequence is MFISTEQ. The helical transmembrane segment at 190 to 221 threads the bilayer; it reads TERDSATAYRMTVEVLGTVLGTAIQGQIVGQA. The Extracellular segment spans residues 222–241; sequence DTPCFQDLNSSTVASQSANH. Cysteine 225 and cysteine 473 are disulfide-bonded. Asparagine 230 and asparagine 240 each carry an N-linked (GlcNAc...) asparagine glycan. Residues 242–275 traverse the membrane as a helical segment; sequence THGTTSHRETQKAYLLAAGVIVCIYIICAVILIL. The Cytoplasmic portion of the chain corresponds to 276-306; that stretch reads GVREQREPYEAQQSEPIAYFRGLRLVMSHGP. The helical transmembrane segment at 307–333 threads the bilayer; that stretch reads YIKLITGFLFTSLAFMLVEGNFVLFCT. Residues 334-344 are Extracellular-facing; it reads YTLGFRNEFQN. The helical transmembrane segment at 345-363 threads the bilayer; that stretch reads LLLAIMLSATLTIPIWQWF. The Cytoplasmic portion of the chain corresponds to 364 to 367; that stretch reads LTRF. A helical membrane pass occupies residues 368 to 389; sequence GKKTAVYVGISSAVPFLILVAL. Topologically, residues 390 to 392 are extracellular; the sequence is MES. The helical transmembrane segment at 393–429 threads the bilayer; that stretch reads NLIITYAVAVAAGISVAAAFLLPWSMLPDVIDDFHLK. Residues 430–439 lie on the Cytoplasmic side of the membrane; sequence QPHFHGTEPI. A helical transmembrane segment spans residues 440-466; the sequence is FFSFYVFFTKFASGVSLGISTLSLDFA. At 467–478 the chain is on the extracellular side; the sequence is GYQTRGCSQPER. Residues 479–502 form a helical membrane-spanning segment; it reads VKFTLNMLVTMAPIVLILLGLLLF. Topologically, residues 503–543 are cytoplasmic; it reads KMYPIDEERRRQNKKALQALRDEASSSGCSETDSTELASIL.

This sequence belongs to the major facilitator superfamily. In terms of assembly, interacts with ERVFRD-1/syncytin-2. As to expression, in placenta, associated with trophoblast cells.

It is found in the cell membrane. It localises to the endoplasmic reticulum membrane. The catalysed reaction is a 1-acyl-sn-glycero-3-phosphocholine(in) + Na(+)(in) = a 1-acyl-sn-glycero-3-phosphocholine(out) + Na(+)(out). It carries out the reaction 1-(4Z,7Z,10Z,13Z,16Z,19Z-docosahexaenoyl)-sn-glycero-3-phosphocholine(in) + Na(+)(in) = 1-(4Z,7Z,10Z,13Z,16Z,19Z-docosahexaenoyl)-sn-glycero-3-phosphocholine(out) + Na(+)(out). It catalyses the reaction 1-(9Z-octadecenoyl)-sn-glycero-3-phosphocholine(in) + Na(+)(in) = 1-(9Z-octadecenoyl)-sn-glycero-3-phosphocholine(out) + Na(+)(out). The enzyme catalyses 1-hexadecanoyl-sn-glycero-3-phosphocholine(in) + Na(+)(in) = 1-hexadecanoyl-sn-glycero-3-phosphocholine(out) + Na(+)(out). The catalysed reaction is a 1-acyl-sn-glycero-3-phosphoethanolamine(in) + Na(+)(in) = a 1-acyl-sn-glycero-3-phosphoethanolamine(out) + Na(+)(out). Sodium-dependent lysophosphatidylcholine (LPC) symporter, which plays an essential role for blood-brain barrier formation and function. Specifically expressed in endothelium of the blood-brain barrier of micro-vessels and transports LPC into the brain. Transport of LPC is essential because it constitutes the major mechanism by which docosahexaenoic acid (DHA), an omega-3 fatty acid that is essential for normal brain growth and cognitive function, enters the brain. Transports LPC carrying long-chain fatty acids such LPC oleate and LPC palmitate with a minimum acyl chain length of 14 carbons. Does not transport docosahexaenoic acid in unesterified fatty acid. Specifically required for blood-brain barrier formation and function, probably by mediating lipid transport. Not required for central nervous system vascular morphogenesis. Acts as a transporter for tunicamycin, an inhibitor of asparagine-linked glycosylation. In placenta, acts as a receptor for ERVFRD-1/syncytin-2 and is required for trophoblast fusion. This chain is Sodium-dependent lysophosphatidylcholine symporter 1, found in Homo sapiens (Human).